A 194-amino-acid chain; its full sequence is ATP-dependent Clp protease proteolytic subunit (194 aa).

The active-site Nucleophile is the serine 98. Histidine 123 is a catalytic residue.

The protein belongs to the peptidase S14 family. As to quaternary structure, fourteen ClpP subunits assemble into 2 heptameric rings which stack back to back to give a disk-like structure with a central cavity, resembling the structure of eukaryotic proteasomes.

It localises to the cytoplasm. It catalyses the reaction Hydrolysis of proteins to small peptides in the presence of ATP and magnesium. alpha-casein is the usual test substrate. In the absence of ATP, only oligopeptides shorter than five residues are hydrolyzed (such as succinyl-Leu-Tyr-|-NHMec, and Leu-Tyr-Leu-|-Tyr-Trp, in which cleavage of the -Tyr-|-Leu- and -Tyr-|-Trp bonds also occurs).. In terms of biological role, cleaves peptides in various proteins in a process that requires ATP hydrolysis. Has a chymotrypsin-like activity. Plays a major role in the degradation of misfolded proteins. This is ATP-dependent Clp protease proteolytic subunit from Syntrophus aciditrophicus (strain SB).